The following is a 382-amino-acid chain: Protein-arginine rhamnosyltransferase (382 aa).

Residues N17–D20, Y187, Q252, and R268–S272 each bind dTDP-beta-L-rhamnose. D20 serves as the catalytic Proton acceptor. E270 is an active-site residue.

The protein belongs to the glycosyltransferase 104 family.

The enzyme catalyses dTDP-beta-L-rhamnose + L-arginyl-[protein] = N(omega)-(alpha-L-rhamnosyl)-L-arginyl-[protein] + dTDP + H(+). Protein-arginine rhamnosyltransferase that catalyzes the transfer of a single rhamnose to elongation factor P (EF-P) on 'Lys-32', a modification required for EF-P-dependent rescue of polyproline stalled ribosomes. The protein is Protein-arginine rhamnosyltransferase of Neisseria meningitidis.